Here is a 586-residue protein sequence, read N- to C-terminus: Arginine--tRNA ligase (586 aa).

Positions 128–138 (ANPTGPLHVGH) match the 'HIGH' region motif.

This sequence belongs to the class-I aminoacyl-tRNA synthetase family. Monomer.

Its subcellular location is the cytoplasm. It catalyses the reaction tRNA(Arg) + L-arginine + ATP = L-arginyl-tRNA(Arg) + AMP + diphosphate. The chain is Arginine--tRNA ligase from Thioalkalivibrio sulfidiphilus (strain HL-EbGR7).